A 253-amino-acid polypeptide reads, in one-letter code: 5-oxoprolinase subunit A (253 aa).

The protein belongs to the LamB/PxpA family. In terms of assembly, forms a complex composed of PxpA, PxpB and PxpC.

The catalysed reaction is 5-oxo-L-proline + ATP + 2 H2O = L-glutamate + ADP + phosphate + H(+). Functionally, catalyzes the cleavage of 5-oxoproline to form L-glutamate coupled to the hydrolysis of ATP to ADP and inorganic phosphate. The chain is 5-oxoprolinase subunit A from Bacillus cereus (strain Q1).